The following is a 718-amino-acid chain: Acetolactate synthase, mitochondrial (718 aa).

2 disordered regions span residues Met-1 to Tyr-50 and Arg-72 to Pro-101. A compositionally biased stretch (polar residues) spans Arg-32 to Ala-45. Residues Ser-76–Pro-99 are compositionally biased toward low complexity. Glu-173 contributes to the thiamine diphosphate binding site. An FAD-binding site is contributed by Arg-275. The segment at Ile-296–Asp-327 is disordered. Positions Ser-306 to Pro-325 are enriched in low complexity. FAD is bound by residues His-397–Arg-418 and Glu-449–Asp-468. Positions Gln-541–Phe-621 are thiamine pyrophosphate binding. Mg(2+)-binding residues include Asp-592 and Asn-619.

Belongs to the TPP enzyme family. Mg(2+) serves as cofactor. Thiamine diphosphate is required as a cofactor.

It localises to the mitochondrion. It carries out the reaction 2 pyruvate + H(+) = (2S)-2-acetolactate + CO2. It functions in the pathway amino-acid biosynthesis; L-isoleucine biosynthesis; L-isoleucine from 2-oxobutanoate: step 1/4. The protein operates within amino-acid biosynthesis; L-valine biosynthesis; L-valine from pyruvate: step 1/4. This Cryptococcus neoformans var. neoformans serotype D (strain JEC21 / ATCC MYA-565) (Filobasidiella neoformans) protein is Acetolactate synthase, mitochondrial (ILV2).